We begin with the raw amino-acid sequence, 156 residues long: MLRQFLVSTAVRRVVVPSMAQTRCASNLDKSEYTTPGEIVDYDDPPHIPVPEYPSRPDEPLETRKQRLLYQSRKRGMLENDLLLSTFVAKYLKSFTADQTAQYDDLINGVSNDWDIFYWATETKPTPPEFDTEIMRLLKEHVKNAEKVQRIRQPDL.

A mitochondrion-targeting transit peptide spans M1 to C24. A disordered region spans residues T35 to E62.

It belongs to the SDHAF2 family. In terms of assembly, interacts with the flavoprotein subunit within the SDH catalytic dimer.

Its subcellular location is the mitochondrion matrix. Its function is as follows. Plays an essential role in the assembly of succinate dehydrogenase (SDH), an enzyme complex (also referred to as respiratory complex II) that is a component of both the tricarboxylic acid (TCA) cycle and the mitochondrial electron transport chain, and which couples the oxidation of succinate to fumarate with the reduction of ubiquinone (coenzyme Q) to ubiquinol. Required for flavinylation (covalent attachment of FAD) of the flavoprotein subunit of the SDH catalytic dimer. The polypeptide is Succinate dehydrogenase assembly factor 2-A, mitochondrial (Drosophila ananassae (Fruit fly)).